Reading from the N-terminus, the 356-residue chain is Histidinol-phosphate aminotransferase 1 (356 aa).

N6-(pyridoxal phosphate)lysine is present on K217.

The protein belongs to the class-II pyridoxal-phosphate-dependent aminotransferase family. Histidinol-phosphate aminotransferase subfamily. Homodimer. Pyridoxal 5'-phosphate serves as cofactor.

The catalysed reaction is L-histidinol phosphate + 2-oxoglutarate = 3-(imidazol-4-yl)-2-oxopropyl phosphate + L-glutamate. The protein operates within amino-acid biosynthesis; L-histidine biosynthesis; L-histidine from 5-phospho-alpha-D-ribose 1-diphosphate: step 7/9. The protein is Histidinol-phosphate aminotransferase 1 of Burkholderia mallei (strain ATCC 23344).